Consider the following 23-residue polypeptide: M-poneritoxin-Nc1a (23 aa).

Belongs to the non-disulfide-bridged peptide (NDBP) superfamily. Medium-length antimicrobial peptide (group 3) family. Ponericin-W subfamily. As to expression, expressed by the venom gland.

It localises to the secreted. The protein localises to the target cell membrane. Functionally, membrane-perturbating peptide with multiple activities. It is insecticidal, since it induces contractile paralysis in insects (L.cuprina) during several hours, and death after 24 hours. It shows antibacterial activity with higher activity against Gram-positive than Gram-negative bacteria. It is also antiparasitic, since it potently inhibits the larval development of the major pathogenic nematode of ruminants (H.contortus, IC(50)=5.1 uM), but fails to reduce the motility of adult males of the other nematode B.malayi. It also shows cytotoxic activity against HEK293 cells (EC(50)=12-14 uM) and induces hemolysis in human erythrocytes (EC(50)=28.6-48.2 uM). In addition, it causes an important increase in intracellular calcium concentration on neuronal and epithelial cell lines, which supports a non-specific membrane perturbation mechanism of action. In vivo, it induces pain by intraplantar injection into mice, suggesting a defensive function against vertebrate predators. The polypeptide is M-poneritoxin-Nc1a (Neoponera commutata (Large hunting ant)).